Reading from the N-terminus, the 61-residue chain is Photosystem II reaction center protein K (61 aa).

Positions 1 to 24 (MLNILSFIGICLNSFLYSSSFFVA) are excised as a propeptide. A helical transmembrane segment spans residues 40 to 60 (MPVIPLFFFLLAFVWQAAVSF).

Belongs to the PsbK family. In terms of assembly, PSII is composed of 1 copy each of membrane proteins PsbA, PsbB, PsbC, PsbD, PsbE, PsbF, PsbH, PsbI, PsbJ, PsbK, PsbL, PsbM, PsbT, PsbX, PsbY, PsbZ, Psb30/Ycf12, at least 3 peripheral proteins of the oxygen-evolving complex and a large number of cofactors. It forms dimeric complexes.

Its subcellular location is the plastid. It localises to the chloroplast thylakoid membrane. One of the components of the core complex of photosystem II (PSII). PSII is a light-driven water:plastoquinone oxidoreductase that uses light energy to abstract electrons from H(2)O, generating O(2) and a proton gradient subsequently used for ATP formation. It consists of a core antenna complex that captures photons, and an electron transfer chain that converts photonic excitation into a charge separation. This is Photosystem II reaction center protein K from Cucumis sativus (Cucumber).